Consider the following 392-residue polypeptide: Protein O-glucosyltransferase 1 (392 aa).

Residues 1 to 23 form the signal peptide; that stretch reads MEWWASSPLRLWLLLFLLPSAQG. N40 and N53 each carry an N-linked (GlcNAc...) asparagine glycan. Intrachain disulfides connect C49/C56, C54/C357, C102/C108, and C263/C286. Positions 103–107 are interaction with the consensus sequence C-X-S-X-[PA]-C in peptide substrates; sequence MFPSR. D133 serves as the catalytic Proton donor/acceptor. The interaction with the consensus sequence C-X-S-X-[PA]-C in peptide substrates stretch occupies residues 172–178; the sequence is AVWPIYP. Residue Y177 participates in UDP-alpha-D-glucose binding. A glycan (N-linked (GlcNAc...) asparagine) is linked at N204. UDP-alpha-D-glucose-binding positions include S212, R218, and 274 to 279; that span reads VAASFR. An N-linked (GlcNAc...) asparagine glycan is attached at N373. The short motif at 389–392 is the Prevents secretion from ER element; the sequence is KTEL.

This sequence belongs to the glycosyltransferase 90 family. In terms of tissue distribution, expressed in most adult tissues at different intensities. Abundantly expressed in liver. Expressed also in brain, heart, skeletal muscle, spleen, kidney, placenta, lung and peripheral blood leukocyte. Not detectable in colon, thymus and small intestine. Expressed in the epidermis, especially in the upper parts, stratum spinosum and stratum granulosum (at protein level).

Its subcellular location is the endoplasmic reticulum lumen. It catalyses the reaction L-seryl-[EGF-like domain protein] + UDP-alpha-D-xylose = 3-O-(beta-D-xylosyl)-L-seryl-[EGF-like domain protein] + UDP + H(+). It carries out the reaction L-seryl-[EGF-like domain protein] + UDP-alpha-D-glucose = 3-O-(beta-D-glucosyl)-L-seryl-[EGF-like domain protein] + UDP + H(+). It participates in protein modification; protein glycosylation. Functionally, dual specificity glycosyltransferase that catalyzes the transfer of glucose and xylose from UDP-glucose and UDP-xylose, respectively, to a serine residue found in the consensus sequence of C-X-S-X-P-C. Specifically targets extracellular EGF repeats of protein such as CRB2, F7, F9 and NOTCH2. Acts as a positive regulator of Notch signaling by mediating O-glucosylation of Notch, leading to regulate muscle development. Notch glucosylation does not affect Notch ligand binding. Required during early development to promote gastrulation: acts by mediating O-glucosylation of CRB2, which is required for CRB2 localization to the cell membrane. This chain is Protein O-glucosyltransferase 1, found in Homo sapiens (Human).